Reading from the N-terminus, the 243-residue chain is ATP synthase subunit a (243 aa).

8 consecutive transmembrane segments (helical) span residues 29 to 49 (NASLFMVLSTFLISLSCYVGL), 54 to 74 (VIPNPLQSIIEIIYDFIVSTI), 89 to 109 (VFTIFTFILVCNLLGILPLGF), 114 to 134 (HIAVTFAISMIVFISVTFIGF), 141 to 161 (FLHILLPQGTPMWLAPMMVLI), 177 to 197 (LAANMIAGHTIIKVIAGFVIN), 200 to 220 (IFLTPLPIAFIIILIGFEIFV), and 221 to 241 (AILQAYIFTVLTCVYLSDAVN).

This sequence belongs to the ATPase A chain family. As to quaternary structure, F-type ATPases have 2 components, CF(1) - the catalytic core - and CF(0) - the membrane proton channel. CF(1) has five subunits: alpha(3), beta(3), gamma(1), delta(1), epsilon(1). CF(0) has three main subunits: a(1), b(2) and c(9-12). The alpha and beta chains form an alternating ring which encloses part of the gamma chain. CF(1) is attached to CF(0) by a central stalk formed by the gamma and epsilon chains, while a peripheral stalk is formed by the delta and b chains.

It is found in the cell inner membrane. Key component of the proton channel; it plays a direct role in the translocation of protons across the membrane. The polypeptide is ATP synthase subunit a (Ehrlichia ruminantium (strain Welgevonden)).